The following is a 94-amino-acid chain: Prepro-gonadotropin-releasing hormone-like protein (94 aa).

Residues 1–21 form the signal peptide; that stretch reads MNACILLTTLVTMITIEKVQG.

It is found in the secreted. Functionally, neuropeptide involved in reproduction. May be an important hormone in the regulation of gonadal maturation. The chain is Prepro-gonadotropin-releasing hormone-like protein from Ruditapes philippinarum (Japanese carpet shell).